The sequence spans 533 residues: T-complex protein 1 subunit delta (533 aa).

The disordered stretch occupies residues 1 to 24 (MVVKPAARGMKPQGQAYKDKSKPA).

This sequence belongs to the TCP-1 chaperonin family. Heterooligomeric complex of about 850 to 900 kDa that forms two stacked rings, 12 to 16 nm in diameter.

It is found in the cytoplasm. Its function is as follows. Molecular chaperone; assists the folding of proteins upon ATP hydrolysis. Known to play a role, in vitro, in the folding of actin and tubulin. This chain is T-complex protein 1 subunit delta, found in Ochlerotatus triseriatus (Eastern treehole mosquito).